The following is a 181-amino-acid chain: Protein GrpE (181 aa).

This sequence belongs to the GrpE family. As to quaternary structure, homodimer.

It is found in the cytoplasm. Its function is as follows. Participates actively in the response to hyperosmotic and heat shock by preventing the aggregation of stress-denatured proteins, in association with DnaK and GrpE. It is the nucleotide exchange factor for DnaK and may function as a thermosensor. Unfolded proteins bind initially to DnaJ; upon interaction with the DnaJ-bound protein, DnaK hydrolyzes its bound ATP, resulting in the formation of a stable complex. GrpE releases ADP from DnaK; ATP binding to DnaK triggers the release of the substrate protein, thus completing the reaction cycle. Several rounds of ATP-dependent interactions between DnaJ, DnaK and GrpE are required for fully efficient folding. This chain is Protein GrpE, found in Delftia acidovorans (strain DSM 14801 / SPH-1).